The chain runs to 607 residues: Acyl-coenzyme A thioesterase 11 (607 aa).

A mitochondrion-targeting transit peptide spans 1–13; sequence MIQNVGNHLRRGL. 2 positions are modified to phosphoserine: Ser-15 and Ser-25. The HotDog ACOT-type 1 domain maps to 43-155; sequence NPTEVQMSQL…LATFVARREI (113 aa). CoA is bound by residues 91 to 93, 120 to 122, Arg-181, and 271 to 273; these read TAS, NSS, and HFR. A HotDog ACOT-type 2 domain is found at 216–329; sequence EKTRVESVEL…FMTFVVLDAD (114 aa). The 211-residue stretch at 375–585 folds into the START domain; that stretch reads LSVPWDPSNQ…GWNGKLAGGH (211 aa).

Isoform 1 is predominantly expressed in skeletal muscle, liver, testis, stomach, spleen, lung and brain. Isoform 2 is predominantly expressed in kidney, uterus, hibernoma and white adipose tissue.

It localises to the mitochondrion matrix. It is found in the cytoplasm. The catalysed reaction is hexadecanoyl-CoA + H2O = hexadecanoate + CoA + H(+). The enzyme catalyses tetradecanoyl-CoA + H2O = tetradecanoate + CoA + H(+). It carries out the reaction dodecanoyl-CoA + H2O = dodecanoate + CoA + H(+). It catalyses the reaction butanoyl-CoA + H2O = butanoate + CoA + H(+). It functions in the pathway lipid metabolism; fatty acid metabolism. Functionally, has an acyl-CoA thioesterase activity with a preference for the long chain fatty acyl-CoA thioesters hexadecanoyl-CoA/palmitoyl-CoA and tetradecanoyl-CoA/myristoyl-CoA which are the main substrates in the mitochondrial beta-oxidation pathway. The polypeptide is Acyl-coenzyme A thioesterase 11 (ACOT11) (Homo sapiens (Human)).